The chain runs to 396 residues: MINVYSNLMSAWPATMAMSPKLNRNMPTFSQIWDYERITPASAAGETLKSIQGAIGEYFERRHFFNEIVTGGQKTLYEMMPPSAAKAFTEAFFQISSLTRDEIITHKFKTVRAFNLFSLEQQEIPAVIIALDNITAADDLKFYPDRDTCGCSFHGSLNDAIEGSLCEFMETQSLLLYWLQGKANTEISSEIVTGINHIDEILLALRSEGDIRIFDITLPGAPGHAVLTLYGTKNKISRIKYSTGLSYANSLKKALCKSVVELWQSYICLHNFLIGGYTDDDIIDSYQRHFMSCNKYESFTDLCENTVLLSDDVKLTLEENITSDTNLLNYLQQISDNIFVYYARERVSNSLVWYTKIVSPDFFLHMNNSGAININNKIYHTGDGIKVRESKMVPFP.

Residues 41–396 (ASAAGETLKS…VRESKMVPFP (356 aa)) enclose the YcaO domain.

Its subcellular location is the cytoplasm. Its function is as follows. Necessary to process the inactive microcin B17 (McbA) precursor into the active peptide. The chain is Microcin B17-processing protein McbD (mcbD) from Escherichia coli.